Consider the following 194-residue polypeptide: Large ribosomal subunit protein eL15 (194 aa).

Positions 168 to 194 (RSRGLLNKGKGAEKVRPSIRAHQGKGK) are disordered. A compositionally biased stretch (basic residues) spans 184 to 194 (PSIRAHQGKGK).

The protein belongs to the eukaryotic ribosomal protein eL15 family. As to quaternary structure, part of the 50S ribosomal subunit.

The protein is Large ribosomal subunit protein eL15 of Thermococcus kodakarensis (strain ATCC BAA-918 / JCM 12380 / KOD1) (Pyrococcus kodakaraensis (strain KOD1)).